A 205-amino-acid chain; its full sequence is MSKRETTKYKIDRRMGENIWGRPKSPVNRRDYGPGQHGQRRKGKLSDYGVQLRAKQKLKGFYGDISEKQFRKTYEEAARRRGDTGENLIGLLESRLDAVIYRAKFVPTIFASRQFINHGHVNVNGRRTNIQSYRCKPGDVIEIREKSKQLVLVLESVQLVERDVPEYIEADHNQMKATFTRIPAFADVPYAVQMEPNLVVEFYSR.

Residues 1–16 (MSKRETTKYKIDRRMG) show a composition bias toward basic and acidic residues. Residues 1 to 46 (MSKRETTKYKIDRRMGENIWGRPKSPVNRRDYGPGQHGQRRKGKLS) are disordered. The region spanning 94-157 (SRLDAVIYRA…KQLVLVLESV (64 aa)) is the S4 RNA-binding domain.

This sequence belongs to the universal ribosomal protein uS4 family. In terms of assembly, part of the 30S ribosomal subunit. Contacts protein S5. The interaction surface between S4 and S5 is involved in control of translational fidelity.

One of the primary rRNA binding proteins, it binds directly to 16S rRNA where it nucleates assembly of the body of the 30S subunit. In terms of biological role, with S5 and S12 plays an important role in translational accuracy. The chain is Small ribosomal subunit protein uS4 from Bartonella henselae (strain ATCC 49882 / DSM 28221 / CCUG 30454 / Houston 1) (Rochalimaea henselae).